The primary structure comprises 953 residues: Isoleucine--tRNA ligase (953 aa).

Residues 58 to 68 carry the 'HIGH' region motif; that stretch reads PYANGSIHIGH. Residue Glu577 coordinates L-isoleucyl-5'-AMP. The short motif at 618-622 is the 'KMSKS' region element; sequence KMSKS. Residue Lys621 participates in ATP binding. The Zn(2+) site is built by Cys916, Cys919, Cys936, and Cys939.

It belongs to the class-I aminoacyl-tRNA synthetase family. IleS type 1 subfamily. In terms of assembly, monomer. Zn(2+) is required as a cofactor.

Its subcellular location is the cytoplasm. It carries out the reaction tRNA(Ile) + L-isoleucine + ATP = L-isoleucyl-tRNA(Ile) + AMP + diphosphate. Catalyzes the attachment of isoleucine to tRNA(Ile). As IleRS can inadvertently accommodate and process structurally similar amino acids such as valine, to avoid such errors it has two additional distinct tRNA(Ile)-dependent editing activities. One activity is designated as 'pretransfer' editing and involves the hydrolysis of activated Val-AMP. The other activity is designated 'posttransfer' editing and involves deacylation of mischarged Val-tRNA(Ile). The sequence is that of Isoleucine--tRNA ligase from Aeromonas hydrophila subsp. hydrophila (strain ATCC 7966 / DSM 30187 / BCRC 13018 / CCUG 14551 / JCM 1027 / KCTC 2358 / NCIMB 9240 / NCTC 8049).